We begin with the raw amino-acid sequence, 250 residues long: Leucyl/phenylalanyl-tRNA--protein transferase (250 aa).

It belongs to the L/F-transferase family.

The protein resides in the cytoplasm. The catalysed reaction is N-terminal L-lysyl-[protein] + L-leucyl-tRNA(Leu) = N-terminal L-leucyl-L-lysyl-[protein] + tRNA(Leu) + H(+). It catalyses the reaction N-terminal L-arginyl-[protein] + L-leucyl-tRNA(Leu) = N-terminal L-leucyl-L-arginyl-[protein] + tRNA(Leu) + H(+). The enzyme catalyses L-phenylalanyl-tRNA(Phe) + an N-terminal L-alpha-aminoacyl-[protein] = an N-terminal L-phenylalanyl-L-alpha-aminoacyl-[protein] + tRNA(Phe). Functionally, functions in the N-end rule pathway of protein degradation where it conjugates Leu, Phe and, less efficiently, Met from aminoacyl-tRNAs to the N-termini of proteins containing an N-terminal arginine or lysine. This Xanthomonas oryzae pv. oryzae (strain MAFF 311018) protein is Leucyl/phenylalanyl-tRNA--protein transferase.